The following is a 539-amino-acid chain: Chaperonin GroEL (539 aa).

ATP is bound by residues 29 to 32 (TLGP), 86 to 90 (DGTTT), Gly-413, 477 to 479 (NAA), and Asp-493.

The protein belongs to the chaperonin (HSP60) family. Forms a cylinder of 14 subunits composed of two heptameric rings stacked back-to-back. Interacts with the co-chaperonin GroES.

It is found in the cytoplasm. It carries out the reaction ATP + H2O + a folded polypeptide = ADP + phosphate + an unfolded polypeptide.. In terms of biological role, together with its co-chaperonin GroES, plays an essential role in assisting protein folding. The GroEL-GroES system forms a nano-cage that allows encapsulation of the non-native substrate proteins and provides a physical environment optimized to promote and accelerate protein folding. The sequence is that of Chaperonin GroEL from Clavibacter michiganensis subsp. michiganensis (strain NCPPB 382).